The chain runs to 181 residues: Adenine phosphoribosyltransferase (181 aa).

This sequence belongs to the purine/pyrimidine phosphoribosyltransferase family. As to quaternary structure, homodimer.

Its subcellular location is the cytoplasm. The enzyme catalyses AMP + diphosphate = 5-phospho-alpha-D-ribose 1-diphosphate + adenine. It participates in purine metabolism; AMP biosynthesis via salvage pathway; AMP from adenine: step 1/1. Its function is as follows. Catalyzes a salvage reaction resulting in the formation of AMP, that is energically less costly than de novo synthesis. This is Adenine phosphoribosyltransferase from Cytophaga hutchinsonii (strain ATCC 33406 / DSM 1761 / CIP 103989 / NBRC 15051 / NCIMB 9469 / D465).